The chain runs to 324 residues: Glyoxylate/hydroxypyruvate reductase B (324 aa).

Active-site residues include R237 and E266. H285 (proton donor) is an active-site residue.

It belongs to the D-isomer specific 2-hydroxyacid dehydrogenase family. GhrB subfamily. As to quaternary structure, homodimer.

Its subcellular location is the cytoplasm. The enzyme catalyses glycolate + NADP(+) = glyoxylate + NADPH + H(+). The catalysed reaction is (R)-glycerate + NAD(+) = 3-hydroxypyruvate + NADH + H(+). It carries out the reaction (R)-glycerate + NADP(+) = 3-hydroxypyruvate + NADPH + H(+). In terms of biological role, catalyzes the NADPH-dependent reduction of glyoxylate and hydroxypyruvate into glycolate and glycerate, respectively. The polypeptide is Glyoxylate/hydroxypyruvate reductase B (Salmonella paratyphi A (strain ATCC 9150 / SARB42)).